The following is a 491-amino-acid chain: Ketol-acid reductoisomerase (NADP(+)) (491 aa).

The region spanning 15 to 208 (AQLGKCRFMG…GGHRAGVLES (194 aa)) is the KARI N-terminal Rossmann domain. NADP(+)-binding positions include 45–48 (CGAQ), Arg-68, Arg-76, Ser-78, and 108–110 (DKQ). Residue His-132 is part of the active site. An NADP(+)-binding site is contributed by Gly-158. 2 KARI C-terminal knotted domains span residues 209–344 (SFVA…TAPQ) and 345–484 (FEGK…MTDM). Residues Asp-217, Glu-221, Glu-389, and Glu-393 each contribute to the Mg(2+) site. Residue Ser-414 participates in substrate binding.

Belongs to the ketol-acid reductoisomerase family. Mg(2+) serves as cofactor.

The enzyme catalyses (2R)-2,3-dihydroxy-3-methylbutanoate + NADP(+) = (2S)-2-acetolactate + NADPH + H(+). The catalysed reaction is (2R,3R)-2,3-dihydroxy-3-methylpentanoate + NADP(+) = (S)-2-ethyl-2-hydroxy-3-oxobutanoate + NADPH + H(+). Its pathway is amino-acid biosynthesis; L-isoleucine biosynthesis; L-isoleucine from 2-oxobutanoate: step 2/4. The protein operates within amino-acid biosynthesis; L-valine biosynthesis; L-valine from pyruvate: step 2/4. Functionally, involved in the biosynthesis of branched-chain amino acids (BCAA). Catalyzes an alkyl-migration followed by a ketol-acid reduction of (S)-2-acetolactate (S2AL) to yield (R)-2,3-dihydroxy-isovalerate. In the isomerase reaction, S2AL is rearranged via a Mg-dependent methyl migration to produce 3-hydroxy-3-methyl-2-ketobutyrate (HMKB). In the reductase reaction, this 2-ketoacid undergoes a metal-dependent reduction by NADPH to yield (R)-2,3-dihydroxy-isovalerate. This Salmonella agona (strain SL483) protein is Ketol-acid reductoisomerase (NADP(+)).